A 327-amino-acid chain; its full sequence is Zinc transport protein ZntB (327 aa).

Over 1–271 (MDVVEGKALQ…AMNRRTYTMS (271 aa)) the chain is Cytoplasmic. The chain crosses the membrane as a helical span at residues 272 to 292 (LLAMVFLPTTFLTGLFGVNLG). Residues 293-300 (GIPGNTDA) are Periplasmic-facing. The chain crosses the membrane as a helical span at residues 301-321 (FGFTIFCMMLVVLVLSVAWWL). Residues 322–327 (KRSKWL) are Cytoplasmic-facing.

The protein belongs to the CorA metal ion transporter (MIT) (TC 1.A.35) family.

The protein resides in the cell inner membrane. The catalysed reaction is Zn(2+)(out) + H(+)(out) = Zn(2+)(in) + H(+)(in). Its function is as follows. Zinc transporter. Acts as a Zn(2+):proton symporter, which likely mediates zinc ion uptake. The polypeptide is Zinc transport protein ZntB (Yersinia pseudotuberculosis serotype O:1b (strain IP 31758)).